A 161-amino-acid chain; its full sequence is Putative TRAP transporter small permease protein HI_1030 (161 aa).

A run of 4 helical transmembrane segments spans residues 13–33 (LEIL…LNVV), 51–71 (YLFI…NQHV), 86–106 (AILK…IIEG), and 135–155 (IAGI…IFFI).

Belongs to the TRAP transporter small permease family.

It is found in the cell inner membrane. In Haemophilus influenzae (strain ATCC 51907 / DSM 11121 / KW20 / Rd), this protein is Putative TRAP transporter small permease protein HI_1030.